Reading from the N-terminus, the 557-residue chain is Dihydroxy-acid dehydratase (557 aa).

Position 78 (D78) interacts with Mg(2+). C119 serves as a coordination point for [2Fe-2S] cluster. Mg(2+) is bound by residues D120 and K121. N6-carboxylysine is present on K121. C192 contacts [2Fe-2S] cluster. Residue E442 coordinates Mg(2+). S468 serves as the catalytic Proton acceptor.

This sequence belongs to the IlvD/Edd family. As to quaternary structure, homodimer. [2Fe-2S] cluster is required as a cofactor. It depends on Mg(2+) as a cofactor.

It carries out the reaction (2R)-2,3-dihydroxy-3-methylbutanoate = 3-methyl-2-oxobutanoate + H2O. The enzyme catalyses (2R,3R)-2,3-dihydroxy-3-methylpentanoate = (S)-3-methyl-2-oxopentanoate + H2O. The protein operates within amino-acid biosynthesis; L-isoleucine biosynthesis; L-isoleucine from 2-oxobutanoate: step 3/4. It functions in the pathway amino-acid biosynthesis; L-valine biosynthesis; L-valine from pyruvate: step 3/4. Its function is as follows. Functions in the biosynthesis of branched-chain amino acids. Catalyzes the dehydration of (2R,3R)-2,3-dihydroxy-3-methylpentanoate (2,3-dihydroxy-3-methylvalerate) into 2-oxo-3-methylpentanoate (2-oxo-3-methylvalerate) and of (2R)-2,3-dihydroxy-3-methylbutanoate (2,3-dihydroxyisovalerate) into 2-oxo-3-methylbutanoate (2-oxoisovalerate), the penultimate precursor to L-isoleucine and L-valine, respectively. The sequence is that of Dihydroxy-acid dehydratase from Bacillus thuringiensis subsp. konkukian (strain 97-27).